The chain runs to 117 residues: Translation initiation factor 1A (117 aa).

The S1-like domain maps to 17 to 92 (IRVPLPDRSK…ERGDIVYRYT (76 aa)).

It belongs to the eIF-1A family.

In terms of biological role, seems to be required for maximal rate of protein biosynthesis. Enhances ribosome dissociation into subunits and stabilizes the binding of the initiator Met-tRNA(I) to 40 S ribosomal subunits. This is Translation initiation factor 1A from Thermococcus kodakarensis (strain ATCC BAA-918 / JCM 12380 / KOD1) (Pyrococcus kodakaraensis (strain KOD1)).